Reading from the N-terminus, the 109-residue chain is Tyrosine-protein phosphatase 4 (109 aa).

The 109-residue stretch at 1–109 folds into the Tyrosine-protein phosphatase domain; that stretch reads SKSASIVMLT…QNSGNHPIVI (109 aa). Substrate is bound at residue Glu-78.

This sequence belongs to the protein-tyrosine phosphatase family.

The catalysed reaction is O-phospho-L-tyrosyl-[protein] + H2O = L-tyrosyl-[protein] + phosphate. The polypeptide is Tyrosine-protein phosphatase 4 (STY-4) (Styela plicata (Wrinkled sea squirt)).